The following is an 857-amino-acid chain: Protein ARG5,6, mitochondrial (857 aa).

The N-acetyltransferase domain maps to 341 to 492; it reads INRNSLRDFG…FDSSSIGSSL (152 aa). Positions 509–532 are disordered; the sequence is GFHHSTVRRNTNPNPPLSEGKQTE. Residue Cys-669 is part of the active site.

It in the N-terminal section; belongs to the acetylglutamate kinase family. This sequence in the C-terminal section; belongs to the NAGSA dehydrogenase family.

It is found in the mitochondrion. The catalysed reaction is N-acetyl-L-glutamate 5-semialdehyde + phosphate + NADP(+) = N-acetyl-L-glutamyl 5-phosphate + NADPH + H(+). The enzyme catalyses N-acetyl-L-glutamate + ATP = N-acetyl-L-glutamyl 5-phosphate + ADP. It participates in amino-acid biosynthesis; L-arginine biosynthesis; N(2)-acetyl-L-ornithine from L-glutamate: step 2/4. It functions in the pathway amino-acid biosynthesis; L-arginine biosynthesis; N(2)-acetyl-L-ornithine from L-glutamate: step 3/4. The sequence is that of Protein ARG5,6, mitochondrial (ARG5,6) from Candida albicans (Yeast).